Reading from the N-terminus, the 131-residue chain is Large ribosomal subunit protein bL17 (131 aa).

Belongs to the bacterial ribosomal protein bL17 family. Part of the 50S ribosomal subunit. Contacts protein L32.

The chain is Large ribosomal subunit protein bL17 from Oenococcus oeni (strain ATCC BAA-331 / PSU-1).